Here is a 160-residue protein sequence, read N- to C-terminus: Phosphopantetheine adenylyltransferase (160 aa).

Threonine 9 is a binding site for substrate. ATP contacts are provided by residues 9 to 10 (TF) and histidine 17. Substrate is bound by residues lysine 41, leucine 73, and arginine 87. ATP is bound by residues 88–90 (GLR), glutamate 98, and 123–129 (LSYISST).

The protein belongs to the bacterial CoaD family. In terms of assembly, homohexamer. Mg(2+) serves as cofactor.

It localises to the cytoplasm. It carries out the reaction (R)-4'-phosphopantetheine + ATP + H(+) = 3'-dephospho-CoA + diphosphate. It functions in the pathway cofactor biosynthesis; coenzyme A biosynthesis; CoA from (R)-pantothenate: step 4/5. Functionally, reversibly transfers an adenylyl group from ATP to 4'-phosphopantetheine, yielding dephospho-CoA (dPCoA) and pyrophosphate. This Marinobacter nauticus (strain ATCC 700491 / DSM 11845 / VT8) (Marinobacter aquaeolei) protein is Phosphopantetheine adenylyltransferase.